The primary structure comprises 352 residues: Phosphatidylglycerol--prolipoprotein diacylglyceryl transferase (352 aa).

A run of 4 helical transmembrane segments spans residues 20 to 40 (WYGL…TWLA), 55 to 75 (FITY…VLFY), 97 to 117 (EGGM…LLYA), and 122 to 142 (VNSL…VFFG). Position 143 (Arg143) interacts with a 1,2-diacyl-sn-glycero-3-phospho-(1'-sn-glycerol). Transmembrane regions (helical) follow at residues 248-268 (SQLF…FFLW), 275-295 (GFIA…DEHF), and 314-334 (WLSL…TRAA).

The protein belongs to the Lgt family.

Its subcellular location is the cell inner membrane. The enzyme catalyses L-cysteinyl-[prolipoprotein] + a 1,2-diacyl-sn-glycero-3-phospho-(1'-sn-glycerol) = an S-1,2-diacyl-sn-glyceryl-L-cysteinyl-[prolipoprotein] + sn-glycerol 1-phosphate + H(+). It participates in protein modification; lipoprotein biosynthesis (diacylglyceryl transfer). Its function is as follows. Catalyzes the transfer of the diacylglyceryl group from phosphatidylglycerol to the sulfhydryl group of the N-terminal cysteine of a prolipoprotein, the first step in the formation of mature lipoproteins. The polypeptide is Phosphatidylglycerol--prolipoprotein diacylglyceryl transferase (Bdellovibrio bacteriovorus (strain ATCC 15356 / DSM 50701 / NCIMB 9529 / HD100)).